The sequence spans 502 residues: Putative F-box/FBD/LRR-repeat protein At5g22610 (502 aa).

An F-box domain is found at 17–63; sequence EDLISKLPEVLLSQILSYLPTKDIVRTSVLSKRWKSVWLLIPGLDLD. 7 LRR repeats span residues 70–98, 99–127, 147–180, 181–206, 208–228, 238–263, and 344–373; these read YDTF…KLSI, QKNE…DVEF, CKTL…CLEE, NVYS…TIVK, DDNV…SVGY, YYYD…TFNN, and SVWL…VLET. One can recognise an FBD domain in the interval 384–435; that stretch reads VERRVSSVPECLLSSLEFVEIKNRISVDDGALEVARYFVENSVNLQKVVLRL.

The protein is Putative F-box/FBD/LRR-repeat protein At5g22610 of Arabidopsis thaliana (Mouse-ear cress).